The sequence spans 423 residues: MLDTLLINIGQLLTMDQEDGLLRREAMNTLPVIENGAVGIENGVITFVGTAEEAKGLQAKEVIDCGGKMVSPGLVDPHTHLVFGGSRENEIALKLQGVPYLEILEQGGGILSTVNATKQASKEELVQKAKFHLDRMLSFGVTTVEAKSGYGLDDETEWKQLEATAQLQKEHPIDLVSTFLGAHAVPKEYKGRSKEFLQWMLDLLPEMKEKQLAEFVDIFCETGVFSVEESKEFLLKAKELGFDVKIHADEIDPLGGAEAAAEIGAASADHLVGASDKGIEMLANSNTVATLLPGTTFYLNKESFARGRKMIDEGVAVALATDFNPGSCPTENIQLIMSIAMLKLKMTPEEVWNAVTVNSSYAINRGEVAGKIRVGRKADLVLWDAYNYAYVPYHYGVSHVNTVWKNGNIAYTRGEQSWSTATI.

Residues histidine 78 and histidine 80 each coordinate Fe(3+). Zn(2+) is bound by residues histidine 78 and histidine 80. Residues arginine 87, tyrosine 150, and histidine 183 each contribute to the 4-imidazolone-5-propanoate site. Tyrosine 150 contacts N-formimidoyl-L-glutamate. A Fe(3+)-binding site is contributed by histidine 247. Histidine 247 lines the Zn(2+) pocket. Glutamate 250 provides a ligand contact to 4-imidazolone-5-propanoate. Fe(3+) is bound at residue aspartate 322. Aspartate 322 serves as a coordination point for Zn(2+). Positions 324 and 326 each coordinate N-formimidoyl-L-glutamate. Residue serine 327 participates in 4-imidazolone-5-propanoate binding.

Belongs to the metallo-dependent hydrolases superfamily. HutI family. It depends on Zn(2+) as a cofactor. Fe(3+) is required as a cofactor.

It is found in the cytoplasm. It carries out the reaction 4-imidazolone-5-propanoate + H2O = N-formimidoyl-L-glutamate. It functions in the pathway amino-acid degradation; L-histidine degradation into L-glutamate; N-formimidoyl-L-glutamate from L-histidine: step 3/3. Its function is as follows. Catalyzes the hydrolytic cleavage of the carbon-nitrogen bond in imidazolone-5-propanoate to yield N-formimidoyl-L-glutamate. It is the third step in the universal histidine degradation pathway. In Bacillus thuringiensis (strain Al Hakam), this protein is Imidazolonepropionase.